We begin with the raw amino-acid sequence, 159 residues long: uncharacterized protein (159 aa).

3 consecutive transmembrane segments (helical) span residues 76 to 96 (AIKY…FIGK), 104 to 124 (IVML…FSPT), and 131 to 151 (FGAG…VIGG).

The protein localises to the membrane. This is an uncharacterized protein from Acanthamoeba polyphaga (Amoeba).